A 500-amino-acid polypeptide reads, in one-letter code: Serine/threonine protein phosphatase 2A 57 kDa regulatory subunit B' kappa isoform (500 aa).

The interval 1-53 (MFKQFLSKLPRKSSKSDSGELNRSSSGPVSSPVQRSGTSGGGSGPVRSNSGKR) is disordered. The span at 21 to 37 (LNRSSSGPVSSPVQRSG) shows a compositional bias: polar residues.

It belongs to the phosphatase 2A regulatory subunit B56 family. PP2A consists of a common heteromeric enzyme, composed of a catalytic subunit (subunits C), a constant regulatory subunit (subunit A), and a variety of regulatory subunits such as subunits B (the R2/B/PR55/B55, R3/B''/PR72/PR130/PR59 and R5/B'/B56 families).

The protein resides in the cytoplasm. The B regulatory subunit may modulate substrate selectivity and catalytic activity, and may also direct the localization of the catalytic enzyme to a particular subcellular compartment. In Arabidopsis thaliana (Mouse-ear cress), this protein is Serine/threonine protein phosphatase 2A 57 kDa regulatory subunit B' kappa isoform (B'KAPPA).